The following is a 173-amino-acid chain: Ribosome maturation factor RimM (173 aa).

The region spanning 92 to 165 is the PRC barrel domain; sequence EGEFYHADLI…RVVIEMPGEI (74 aa).

It belongs to the RimM family. As to quaternary structure, binds ribosomal protein uS19.

The protein resides in the cytoplasm. An accessory protein needed during the final step in the assembly of 30S ribosomal subunit, possibly for assembly of the head region. Essential for efficient processing of 16S rRNA. May be needed both before and after RbfA during the maturation of 16S rRNA. It has affinity for free ribosomal 30S subunits but not for 70S ribosomes. In Nitrobacter hamburgensis (strain DSM 10229 / NCIMB 13809 / X14), this protein is Ribosome maturation factor RimM.